The sequence spans 540 residues: Dynein axonemal assembly factor 3 homolog (540 aa).

The segment at 480 to 499 is disordered; that stretch reads AVTEAMPESTFKYDTDTDYG.

It belongs to the DNAAF3 family. As to expression, expressed in mechanosensory chordotonal (Ch) neurons, spermatocytes and spermatids (at protein level).

It localises to the cytoplasm. It is found in the dynein axonemal particle. Its function is as follows. Required for the assembly of axonemal inner and outer dynein arms. Involved in the cytoplasmic preassembly of dyneins into complexes before their transport into cilia. Essential for the development of axonemal dynein motors in the sensory cilium of mechanosensory chordotonal (Ch) neurons and sperm flagellum, and consequently, is required for the mechanotransduction process of hearing and sperm mobility. This chain is Dynein axonemal assembly factor 3 homolog, found in Drosophila melanogaster (Fruit fly).